The following is a 256-amino-acid chain: Floral homeotic protein APETALA 1 (256 aa).

One can recognise an MADS-box domain in the interval 1-61 (MGRGRVQLKR…GKLFEYSTDS (61 aa)). Residues 88–178 (NTNWSMEYNR…FKQIKEREKI (91 aa)) form the K-box domain.

In terms of assembly, homodimer capable of binding to CArG-box sequences.

Its subcellular location is the nucleus. Its function is as follows. Transcription factor that promotes early floral meristem identity in synergy with LEAFY. Displays a redundant function with CAULIFLOWER in the up-regulation of LEAFY. Required subsequently for the transition of an inflorescence meristem into a floral meristem, and for the normal development of sepals and petals in flowers. Regulates positively B class homeotic proteins. The protein is Floral homeotic protein APETALA 1 (AP1) of Citrus sinensis (Sweet orange).